The sequence spans 255 residues: Cytochrome c oxidase subunit 2 (255 aa).

Residues 1 to 42 (MKFFFFSFINYKVLNDAARPWQIGFQDPATPIMEGIVNLHHD) lie on the Mitochondrial intermembrane side of the membrane. Residues 43–63 (IIFFLIIIIIFVSWILFRTLF) traverse the membrane as a helical segment. At 64–83 (LFNSKTNPVAYNFSHGTFIE) the chain is on the mitochondrial matrix side. Residues 84–104 (LLWTLTPSLVLIGIAVPSFAL) traverse the membrane as a helical segment. Over 105–255 (LYSIDEIIDP…IRWVQNKILD (151 aa)) the chain is Mitochondrial intermembrane. Residues His-187, Cys-222, Glu-224, Cys-226, His-230, and Met-233 each coordinate Cu cation. Mg(2+) is bound at residue Glu-224.

The protein belongs to the cytochrome c oxidase subunit 2 family. As to quaternary structure, component of the cytochrome c oxidase (complex IV, CIV), a multisubunit enzyme composed of a catalytic core of 3 subunits and several supernumerary subunits. The complex exists as a monomer or a dimer and forms supercomplexes (SCs) in the inner mitochondrial membrane with ubiquinol-cytochrome c oxidoreductase (cytochrome b-c1 complex, complex III, CIII). The cofactor is Cu cation.

It is found in the mitochondrion inner membrane. The enzyme catalyses 4 Fe(II)-[cytochrome c] + O2 + 8 H(+)(in) = 4 Fe(III)-[cytochrome c] + 2 H2O + 4 H(+)(out). Component of the cytochrome c oxidase, the last enzyme in the mitochondrial electron transport chain which drives oxidative phosphorylation. The respiratory chain contains 3 multisubunit complexes succinate dehydrogenase (complex II, CII), ubiquinol-cytochrome c oxidoreductase (cytochrome b-c1 complex, complex III, CIII) and cytochrome c oxidase (complex IV, CIV), that cooperate to transfer electrons derived from NADH and succinate to molecular oxygen, creating an electrochemical gradient over the inner membrane that drives transmembrane transport and the ATP synthase. Cytochrome c oxidase is the component of the respiratory chain that catalyzes the reduction of oxygen to water. Electrons originating from reduced cytochrome c in the intermembrane space (IMS) are transferred via the dinuclear copper A center (CU(A)) of subunit 2 and heme A of subunit 1 to the active site in subunit 1, a binuclear center (BNC) formed by heme A3 and copper B (CU(B)). The BNC reduces molecular oxygen to 2 water molecules using 4 electrons from cytochrome c in the IMS and 4 protons from the mitochondrial matrix. In Cyanidium caldarium (Red alga), this protein is Cytochrome c oxidase subunit 2 (COX2).